We begin with the raw amino-acid sequence, 496 residues long: Autophagy-related protein 21 (496 aa).

Residues 1 to 35 (MKVLQFNQDATCCVVAASSHQISIFNCDPFGKCFE) form a WD 1 repeat. The disordered stretch occupies residues 41 to 86 (SKKKTSNNNGTASNSESRNNEESILITNGSRDRTDAEEEEDNEDNA). Residues 46 to 57 (SNNNGTASNSES) show a composition bias toward low complexity. A compositionally biased stretch (acidic residues) spans 75 to 84 (DAEEEEDNED). The WD 2 repeat unit spans residues 148–190 (VMNRKRMCVLLESDQIFIYDISCMKPLETIDLWEDHYKRSQAN). Thr213 carries the phosphothreonine modification. Ser237 carries the post-translational modification Phosphoserine. WD repeat units follow at residues 294-334 (VHKG…DYMS), 346-385 (TRLC…NSLP), and 448-488 (VNES…GECV). The short motif at 342 to 346 (FRRGT) is the L/FRRG motif element.

It belongs to the WD repeat PROPPIN family.

The protein resides in the cytoplasm. It localises to the vacuole membrane. Functionally, required for cytoplasm to vacuole transport (Cvt) vesicles formation and mitophagy. Involved in binding of phosphatidylethanolamine to ATG8 and in recruitment of ATG8 and ATG5 to the pre-autophagosomal structure. Protects ATG8 from ARG4-mediated cleavage. Essential for maturation of proaminopeptidase I. The chain is Autophagy-related protein 21 (ATG21) from Saccharomyces cerevisiae (strain YJM789) (Baker's yeast).